Reading from the N-terminus, the 376-residue chain is Phosphate acyltransferase (376 aa).

Positions 334–376 (AGSLEQAKRDAGGPGSASQMASPIAGPVSGQPAEPYSAQSSKA) are disordered.

It belongs to the PlsX family. Homodimer. Probably interacts with PlsY.

The protein localises to the cytoplasm. It catalyses the reaction a fatty acyl-[ACP] + phosphate = an acyl phosphate + holo-[ACP]. The protein operates within lipid metabolism; phospholipid metabolism. Catalyzes the reversible formation of acyl-phosphate (acyl-PO(4)) from acyl-[acyl-carrier-protein] (acyl-ACP). This enzyme utilizes acyl-ACP as fatty acyl donor, but not acyl-CoA. The chain is Phosphate acyltransferase from Paraburkholderia phymatum (strain DSM 17167 / CIP 108236 / LMG 21445 / STM815) (Burkholderia phymatum).